The sequence spans 213 residues: Virion protein US10 homolog (213 aa).

This sequence belongs to the herpesviridae US10 family. In terms of processing, phosphorylated.

The protein localises to the virion tegument. It localises to the host nucleus matrix. This is Virion protein US10 homolog (US639) from Gallid herpesvirus 2 (strain GA) (GaHV-2).